Reading from the N-terminus, the 116-residue chain is Small ribosomal subunit protein uS13 (116 aa).

Residues G88–A116 are disordered.

This sequence belongs to the universal ribosomal protein uS13 family. In terms of assembly, part of the 30S ribosomal subunit. Forms a loose heterodimer with protein S19. Forms two bridges to the 50S subunit in the 70S ribosome.

Located at the top of the head of the 30S subunit, it contacts several helices of the 16S rRNA. In the 70S ribosome it contacts the 23S rRNA (bridge B1a) and protein L5 of the 50S subunit (bridge B1b), connecting the 2 subunits; these bridges are implicated in subunit movement. Contacts the tRNAs in the A and P-sites. In Finegoldia magna (strain ATCC 29328 / DSM 20472 / WAL 2508) (Peptostreptococcus magnus), this protein is Small ribosomal subunit protein uS13.